Consider the following 282-residue polypeptide: 4-hydroxy-3-methylbut-2-enyl diphosphate reductase (282 aa).

C12 is a binding site for [4Fe-4S] cluster. Residues H40 and H72 each contribute to the (2E)-4-hydroxy-3-methylbut-2-enyl diphosphate site. Dimethylallyl diphosphate contacts are provided by H40 and H72. Residues H40 and H72 each contribute to the isopentenyl diphosphate site. C94 is a [4Fe-4S] cluster binding site. A (2E)-4-hydroxy-3-methylbut-2-enyl diphosphate-binding site is contributed by H122. Position 122 (H122) interacts with dimethylallyl diphosphate. An isopentenyl diphosphate-binding site is contributed by H122. E124 serves as the catalytic Proton donor. T160 is a binding site for (2E)-4-hydroxy-3-methylbut-2-enyl diphosphate. C188 is a binding site for [4Fe-4S] cluster. Residues S216, N218, and S260 each coordinate (2E)-4-hydroxy-3-methylbut-2-enyl diphosphate. Residues S216, N218, and S260 each coordinate dimethylallyl diphosphate. Isopentenyl diphosphate-binding residues include S216, N218, and S260.

It belongs to the IspH family. It depends on [4Fe-4S] cluster as a cofactor.

The enzyme catalyses isopentenyl diphosphate + 2 oxidized [2Fe-2S]-[ferredoxin] + H2O = (2E)-4-hydroxy-3-methylbut-2-enyl diphosphate + 2 reduced [2Fe-2S]-[ferredoxin] + 2 H(+). It catalyses the reaction dimethylallyl diphosphate + 2 oxidized [2Fe-2S]-[ferredoxin] + H2O = (2E)-4-hydroxy-3-methylbut-2-enyl diphosphate + 2 reduced [2Fe-2S]-[ferredoxin] + 2 H(+). The protein operates within isoprenoid biosynthesis; dimethylallyl diphosphate biosynthesis; dimethylallyl diphosphate from (2E)-4-hydroxy-3-methylbutenyl diphosphate: step 1/1. Its pathway is isoprenoid biosynthesis; isopentenyl diphosphate biosynthesis via DXP pathway; isopentenyl diphosphate from 1-deoxy-D-xylulose 5-phosphate: step 6/6. Its function is as follows. Catalyzes the conversion of 1-hydroxy-2-methyl-2-(E)-butenyl 4-diphosphate (HMBPP) into a mixture of isopentenyl diphosphate (IPP) and dimethylallyl diphosphate (DMAPP). Acts in the terminal step of the DOXP/MEP pathway for isoprenoid precursor biosynthesis. The sequence is that of 4-hydroxy-3-methylbut-2-enyl diphosphate reductase from Geotalea daltonii (strain DSM 22248 / JCM 15807 / FRC-32) (Geobacter daltonii).